A 350-amino-acid polypeptide reads, in one-letter code: tRNA uridine(34) hydroxylase (350 aa).

Residues 146–240 (DDPDALFIDM…YARKAREQGL (95 aa)) enclose the Rhodanese domain. The active-site Cysteine persulfide intermediate is the Cys-200.

Belongs to the TrhO family.

It carries out the reaction uridine(34) in tRNA + AH2 + O2 = 5-hydroxyuridine(34) in tRNA + A + H2O. Its function is as follows. Catalyzes oxygen-dependent 5-hydroxyuridine (ho5U) modification at position 34 in tRNAs, the first step in 5-carboxymethoxyuridine (cmo5U) biosynthesis. May be part of an alternate pathway, which is able to bypass cmo5U biogenesis in a subset of tRNAs under aerobic conditions. In Escherichia coli O17:K52:H18 (strain UMN026 / ExPEC), this protein is tRNA uridine(34) hydroxylase.